The sequence spans 291 residues: Probable ABC transporter permease protein PH1038 (291 aa).

Helical transmembrane passes span 7–27 (PFFF…YPVF), 75–95 (IVWI…FALL), 106–126 (IIKS…GLII), 133–153 (GAGV…AITW), 160–180 (ALFS…MLMY), 208–228 (FVIW…TLLW), 232–252 (IFDI…MVLA), and 267–287 (YAAV…LWLI). The ABC transmembrane type-1 domain maps to 71 to 286 (LIHNIVWIAI…ALTFIPALWL (216 aa)).

This sequence belongs to the binding-protein-dependent transport system permease family. MalFG subfamily.

The protein resides in the cell membrane. Its function is as follows. Probably part of a binding-protein-dependent transport system PH1036/38/39. Probably responsible for the translocation of the substrate across the membrane. The chain is Probable ABC transporter permease protein PH1038 from Pyrococcus horikoshii (strain ATCC 700860 / DSM 12428 / JCM 9974 / NBRC 100139 / OT-3).